We begin with the raw amino-acid sequence, 161 residues long: Probable calcium-binding protein CML16 (161 aa).

EF-hand domains are found at residues 8–43, 44–79, 83–118, and 119–154; these read DQIK…LGIK, PRGD…DINE, INQE…MGHP, and LTYR…SAAD. Aspartate 21, aspartate 23, aspartate 25, serine 27, glutamate 32, aspartate 57, asparagine 59, asparagine 61, serine 63, glutamate 68, aspartate 96, aspartate 98, asparagine 100, serine 102, glutamate 107, aspartate 132, asparagine 134, aspartate 136, and glutamate 143 together coordinate Ca(2+).

Its function is as follows. Potential calcium sensor. The protein is Probable calcium-binding protein CML16 (CML16) of Arabidopsis thaliana (Mouse-ear cress).